The primary structure comprises 45 residues: Large ribosomal subunit protein bL34 (45 aa).

Residues 1–45 (MTKRTFGGTSRKRKRVSGFRVRMRTHTGRSVIRSRRKKGRSRIAV) are disordered. Basic residues predominate over residues 10-45 (SRKRKRVSGFRVRMRTHTGRSVIRSRRKKGRSRIAV).

Belongs to the bacterial ribosomal protein bL34 family.

In Prochlorococcus marinus (strain SARG / CCMP1375 / SS120), this protein is Large ribosomal subunit protein bL34.